Reading from the N-terminus, the 426-residue chain is Serine--tRNA ligase (426 aa).

Position 230–232 (230–232) interacts with L-serine; the sequence is TAE. ATP is bound at residue 261 to 263; the sequence is RSE. Glu-284 provides a ligand contact to L-serine. 348–351 contacts ATP; sequence EISS. Residue Ser-384 coordinates L-serine.

Belongs to the class-II aminoacyl-tRNA synthetase family. Type-1 seryl-tRNA synthetase subfamily. As to quaternary structure, homodimer. The tRNA molecule binds across the dimer.

It is found in the cytoplasm. The enzyme catalyses tRNA(Ser) + L-serine + ATP = L-seryl-tRNA(Ser) + AMP + diphosphate + H(+). The catalysed reaction is tRNA(Sec) + L-serine + ATP = L-seryl-tRNA(Sec) + AMP + diphosphate + H(+). Its pathway is aminoacyl-tRNA biosynthesis; selenocysteinyl-tRNA(Sec) biosynthesis; L-seryl-tRNA(Sec) from L-serine and tRNA(Sec): step 1/1. Its function is as follows. Catalyzes the attachment of serine to tRNA(Ser). Is also able to aminoacylate tRNA(Sec) with serine, to form the misacylated tRNA L-seryl-tRNA(Sec), which will be further converted into selenocysteinyl-tRNA(Sec). The sequence is that of Serine--tRNA ligase from Novosphingobium aromaticivorans (strain ATCC 700278 / DSM 12444 / CCUG 56034 / CIP 105152 / NBRC 16084 / F199).